The sequence spans 253 residues: Triosephosphate isomerase (253 aa).

9–11 (NWK) contacts substrate. His-94 serves as the catalytic Electrophile. The active-site Proton acceptor is the Glu-163. Residues Gly-169, Ser-209, and 230–231 (GG) contribute to the substrate site.

This sequence belongs to the triosephosphate isomerase family. In terms of assembly, homodimer.

The protein resides in the cytoplasm. The catalysed reaction is D-glyceraldehyde 3-phosphate = dihydroxyacetone phosphate. It participates in carbohydrate biosynthesis; gluconeogenesis. The protein operates within carbohydrate degradation; glycolysis; D-glyceraldehyde 3-phosphate from glycerone phosphate: step 1/1. Its function is as follows. Involved in the gluconeogenesis. Catalyzes stereospecifically the conversion of dihydroxyacetone phosphate (DHAP) to D-glyceraldehyde-3-phosphate (G3P). The protein is Triosephosphate isomerase of Dehalococcoides mccartyi (strain ATCC BAA-2100 / JCM 16839 / KCTC 5957 / BAV1).